The chain runs to 367 residues: Anthranilate phosphoribosyltransferase (367 aa).

Positions 1-21 (MALSSESSAASAARRPSGGPA) are enriched in low complexity. The segment at 1-24 (MALSSESSAASAARRPSGGPATSW) is disordered. Residues glycine 104, 107–108 (GD), threonine 112, 114–117 (NLST), 132–140 (KHGNRAASS), and glycine 144 each bind 5-phospho-alpha-D-ribose 1-diphosphate. Glycine 104 contacts anthranilate. Serine 116 is a binding site for Mg(2+). Asparagine 135 serves as a coordination point for anthranilate. Residue arginine 190 participates in anthranilate binding. Mg(2+) contacts are provided by aspartate 248 and glutamate 249.

It belongs to the anthranilate phosphoribosyltransferase family. Homodimer. The cofactor is Mg(2+).

The catalysed reaction is N-(5-phospho-beta-D-ribosyl)anthranilate + diphosphate = 5-phospho-alpha-D-ribose 1-diphosphate + anthranilate. It participates in amino-acid biosynthesis; L-tryptophan biosynthesis; L-tryptophan from chorismate: step 2/5. In terms of biological role, catalyzes the transfer of the phosphoribosyl group of 5-phosphorylribose-1-pyrophosphate (PRPP) to anthranilate to yield N-(5'-phosphoribosyl)-anthranilate (PRA). The chain is Anthranilate phosphoribosyltransferase from Mycolicibacterium paratuberculosis (strain ATCC BAA-968 / K-10) (Mycobacterium paratuberculosis).